We begin with the raw amino-acid sequence, 385 residues long: Protein pelota homolog (385 aa).

Residue lysine 162 forms a Glycyl lysine isopeptide (Lys-Gly) (interchain with G-Cter in SUMO2) linkage. Serine 374, serine 380, serine 381, and serine 382 each carry phosphoserine.

It belongs to the eukaryotic release factor 1 family. Pelota subfamily. Component of the Pelota-HBS1L complex, also named Dom34-Hbs1 complex, composed of PELO and HBS1L. Interacts with PINK1. Interacts with ABCE1. Interacts with CNOT4. A divalent metal cation is required as a cofactor.

It is found in the cytoplasm. Component of the Pelota-HBS1L complex, a complex that recognizes stalled ribosomes and triggers the No-Go Decay (NGD) pathway. In the Pelota-HBS1L complex, PELO recognizes ribosomes stalled at the 3' end of an mRNA and engages stalled ribosomes by destabilizing mRNA in the mRNA channel. Following mRNA extraction from stalled ribosomes by the SKI complex, the Pelota-HBS1L complex promotes recruitment of ABCE1, which drives the disassembly of stalled ribosomes, followed by degradation of damaged mRNAs as part of the NGD pathway. As part of the PINK1-regulated signaling, upon mitochondrial damage is recruited to the ribosome/mRNA-ribonucleoprotein complex associated to mitochondrial outer membrane thereby enabling the recruitment of autophagy receptors and induction of mitophagy. The chain is Protein pelota homolog (PELO) from Pongo abelii (Sumatran orangutan).